Reading from the N-terminus, the 325-residue chain is Pyruvate dehydrogenase E1 component subunit beta (325 aa).

Residue glutamate 60 participates in thiamine diphosphate binding.

As to quaternary structure, heterodimer of an alpha and a beta chain. Thiamine diphosphate is required as a cofactor.

It carries out the reaction N(6)-[(R)-lipoyl]-L-lysyl-[protein] + pyruvate + H(+) = N(6)-[(R)-S(8)-acetyldihydrolipoyl]-L-lysyl-[protein] + CO2. Its function is as follows. The pyruvate dehydrogenase complex catalyzes the overall conversion of pyruvate to acetyl-CoA and CO(2). It contains multiple copies of three enzymatic components: pyruvate dehydrogenase (E1), dihydrolipoamide acetyltransferase (E2) and lipoamide dehydrogenase (E3). This is Pyruvate dehydrogenase E1 component subunit beta (pdhB) from Staphylococcus aureus (strain COL).